The sequence spans 376 residues: N-acetyldiaminopimelate deacetylase (376 aa).

Asp-69 is an active-site residue. The Proton acceptor role is filled by Glu-128.

Belongs to the peptidase M20A family. N-acetyldiaminopimelate deacetylase subfamily.

It carries out the reaction N-acetyl-(2S,6S)-2,6-diaminopimelate + H2O = (2S,6S)-2,6-diaminopimelate + acetate. The protein operates within amino-acid biosynthesis; L-lysine biosynthesis via DAP pathway; LL-2,6-diaminopimelate from (S)-tetrahydrodipicolinate (acetylase route): step 3/3. Functionally, catalyzes the conversion of N-acetyl-diaminopimelate to diaminopimelate and acetate. This chain is N-acetyldiaminopimelate deacetylase, found in Streptococcus pneumoniae (strain P1031).